The following is a 318-amino-acid chain: Inner membrane protein YbhN (318 aa).

Residues 1–13 (MSKSHPRWRLAKK) are Periplasmic-facing. A helical transmembrane segment spans residues 14–34 (ILTWLFFIAVIVLLVVYAKKV). The Cytoplasmic segment spans residues 35-50 (DWEEVWKVIRDYNRVA). Residues 51 to 71 (LLSAVGLVVVSYLIYGCYDLL) form a helical membrane-spanning segment. The Periplasmic segment spans residues 72–85 (ARFYCGHKLAKRQV). A helical membrane pass occupies residues 86-106 (MLVSFICYAFNLTLSTWVGGI). Residues 107 to 125 (GMRYRLYSRLGLPGSTITR) are Cytoplasmic-facing. The helical transmembrane segment at 126-146 (IFSLSITTNWLGYILLAGIIF) threads the bilayer. At 147-165 (TAGVVELPDHWYVDQTTLR) the chain is on the periplasmic side. The chain crosses the membrane as a helical span at residues 166 to 186 (ILGIGLLMIIAVYLWFCAFAK). Residues 187 to 205 (HRHMTIKGQKLVLPSWKFA) lie on the Cytoplasmic side of the membrane. Residues 206–226 (LAQMLISSVNWMVMGAIIWLL) traverse the membrane as a helical segment. At 227–233 (LGQSVNY) the chain is on the periplasmic side. The next 2 membrane-spanning stretches (helical) occupy residues 234–254 (FFVL…HIPA) and 255–275 (GIGV…TSKG). The Periplasmic segment spans residues 276–277 (TI). The chain crosses the membrane as a helical span at residues 278–298 (IAALLAYRVLYYFIPLLLALI). Residues 299–318 (CYLLLESQAKKLRAKNEAAM) lie on the Cytoplasmic side of the membrane.

To Synechocystis PCC 6803 slr0712.

Its subcellular location is the cell inner membrane. The chain is Inner membrane protein YbhN (ybhN) from Escherichia coli (strain K12).